The chain runs to 369 residues: Outer membrane protein P2 (369 aa).

The first 20 residues, 1-20 (MKKTLAALIVGAFAASAANA), serve as a signal peptide directing secretion.

This sequence belongs to the Gram-negative porin family. Homotrimer.

It localises to the cell outer membrane. Functionally, forms pores that allow passive diffusion of small molecules across the outer membrane. In Haemophilus influenzae, this protein is Outer membrane protein P2 (ompP2).